Here is a 270-residue protein sequence, read N- to C-terminus: MTIDDRGQIRSARRIVVKVGSSSISGENAGQIGPLVDALAEAHGRGSQVVLVSSGAIATGIPYLALTERPKDLATQQAAAAVGQNVLIYRYQDSLDRYGIVAGQVLLTARDVENPTHRSNAKRAMERLLDLRILPIVNENDTVATHEIRFGDNDRLAALVAKLVEADLLVLLSDVDALYTKPPQESGAERIAHVGWNDQLEGVEIGSAGPSGVGTGGALTKVSAARQAAEHGTAVVLTATSLVVDALRGEPVGTWFAPAQETAVESAPAS.

ATP is bound at residue lysine 18. Substrate contacts are provided by serine 54, aspartate 141, and asparagine 153. ATP is bound at residue 173–174 (SD).

This sequence belongs to the glutamate 5-kinase family.

Its subcellular location is the cytoplasm. The enzyme catalyses L-glutamate + ATP = L-glutamyl 5-phosphate + ADP. The protein operates within amino-acid biosynthesis; L-proline biosynthesis; L-glutamate 5-semialdehyde from L-glutamate: step 1/2. Its function is as follows. Catalyzes the transfer of a phosphate group to glutamate to form L-glutamate 5-phosphate. The polypeptide is Glutamate 5-kinase (Leifsonia xyli subsp. xyli (strain CTCB07)).